Consider the following 64-residue polypeptide: Beta-insect excitatory toxin OdTx12 (64 aa).

The LCN-type CS-alpha/beta domain occupies 1–59 (QSTGGKAPECLLSNYCNNECTKVHYADKGYCCLLSCYCFGLSDDKKVLEISDSRKKYCD). 4 cysteine pairs are disulfide-bonded: C10-C31, C16-C36, C20-C38, and C32-C58.

Belongs to the long (4 C-C) scorpion toxin superfamily. Sodium channel inhibitor family. Beta subfamily. As to expression, expressed by the venom gland.

It is found in the secreted. Its function is as follows. Excitatory insect beta-toxins induce a spastic paralysis. They bind voltage-independently at site-4 of sodium channels (Nav) and shift the voltage of activation toward more negative potentials thereby affecting sodium channel activation and promoting spontaneous and repetitive firing. In vivo, this recombinant protein is lethal to Locusta migratoria larvae after injection, but has no significant effect when orally administered. Is not toxic to mice after intracerebroventricular injection. The protein is Beta-insect excitatory toxin OdTx12 of Odontobuthus doriae (Yellow Iranian scorpion).